We begin with the raw amino-acid sequence, 351 residues long: Divinyl chlorophyll a/b light-harvesting protein PcbC (351 aa).

6 helical membrane-spanning segments follow: residues F27–L47, L64–T84, C89–L109, V203–A223, V244–A264, and L306–L326.

The protein belongs to the PsbB/PsbC family. IsiA/Pcb subfamily. The antenna complex consists of divinyl chlorophylls (a and b) and divinyl chlorophyll a/b binding proteins and binds more divinyl chlorophyll b than does the antenna complex from high-light-adapted Prochlorococcus. Divinyl chlorophyll a is required as a cofactor. It depends on divinyl chlorophyll b as a cofactor.

The protein resides in the cellular thylakoid membrane. Its function is as follows. The antenna complex functions as a light receptor, it captures and delivers excitation energy to photosystems II and I. The Prochlorales pcb genes are not related to higher plant LHCs. The chain is Divinyl chlorophyll a/b light-harvesting protein PcbC (pcbC) from Prochlorococcus marinus (strain SARG / CCMP1375 / SS120).